The primary structure comprises 173 residues: Inorganic pyrophosphatase (173 aa).

Substrate-binding residues include Lys-29, Arg-43, and Tyr-55. Positions 65, 70, and 102 each coordinate Mg(2+). Tyr-141 serves as a coordination point for substrate.

It belongs to the PPase family. In terms of assembly, homohexamer. Mg(2+) is required as a cofactor.

Its subcellular location is the cytoplasm. It catalyses the reaction diphosphate + H2O = 2 phosphate + H(+). In terms of biological role, catalyzes the hydrolysis of inorganic pyrophosphate (PPi) forming two phosphate ions. The polypeptide is Inorganic pyrophosphatase (Gluconobacter oxydans (strain 621H) (Gluconobacter suboxydans)).